The chain runs to 767 residues: Photosystem I P700 chlorophyll a apoprotein A1 (767 aa).

The next 8 helical transmembrane spans lie at isoleucine 72–alanine 95, leucine 158–histidine 181, leucine 197–leucine 221, isoleucine 305–tyrosine 323, tryptophan 364–tyrosine 387, isoleucine 403–isoleucine 429, alanine 451–histidine 473, and phenylalanine 548–leucine 566. Cysteine 590 and cysteine 599 together coordinate [4Fe-4S] cluster. Helical transmembrane passes span histidine 606–tryptophan 627 and threonine 681–phenylalanine 703. Histidine 692 is a binding site for chlorophyll a'. The chlorophyll a site is built by methionine 700 and tyrosine 708. Tryptophan 709 provides a ligand contact to phylloquinone. The helical transmembrane segment at alanine 741–alanine 761 threads the bilayer.

Belongs to the PsaA/PsaB family. In terms of assembly, the PsaA/B heterodimer binds the P700 chlorophyll special pair and subsequent electron acceptors. PSI consists of a core antenna complex that captures photons, and an electron transfer chain that converts photonic excitation into a charge separation. The cyanobacterial PSI reaction center is composed of one copy each of PsaA,B,C,D,E,F,I,J,K,L,M and X, and forms trimeric complexes. It depends on PSI electron transfer chain: 5 chlorophyll a, 1 chlorophyll a', 2 phylloquinones and 3 4Fe-4S clusters. PSI core antenna: 90 chlorophyll a, 22 carotenoids, 3 phospholipids and 1 galactolipid. P700 is a chlorophyll a/chlorophyll a' dimer, A0 is one or more chlorophyll a, A1 is one or both phylloquinones and FX is a shared 4Fe-4S iron-sulfur center. as a cofactor.

It is found in the cellular thylakoid membrane. It carries out the reaction reduced [plastocyanin] + hnu + oxidized [2Fe-2S]-[ferredoxin] = oxidized [plastocyanin] + reduced [2Fe-2S]-[ferredoxin]. In terms of biological role, psaA and PsaB bind P700, the primary electron donor of photosystem I (PSI), as well as the electron acceptors A0, A1 and FX. PSI is a plastocyanin/cytochrome c6-ferredoxin oxidoreductase, converting photonic excitation into a charge separation, which transfers an electron from the donor P700 chlorophyll pair to the spectroscopically characterized acceptors A0, A1, FX, FA and FB in turn. Oxidized P700 is reduced on the lumenal side of the thylakoid membrane by plastocyanin or cytochrome c6. This Synechococcus sp. (strain WH7803) protein is Photosystem I P700 chlorophyll a apoprotein A1.